A 146-amino-acid polypeptide reads, in one-letter code: Large ribosomal subunit protein bL9 (146 aa).

It belongs to the bacterial ribosomal protein bL9 family.

Binds to the 23S rRNA. The sequence is that of Large ribosomal subunit protein bL9 from Deinococcus deserti (strain DSM 17065 / CIP 109153 / LMG 22923 / VCD115).